Reading from the N-terminus, the 680-residue chain is WD repeat-containing protein 48 homolog (680 aa).

WD repeat units follow at residues Q26–Y65, H71–T110, T113–A152, G164–K203, G206–T245, V248–L287, E290–M329, and K350–Q389. The disordered stretch occupies residues E592 to S616.

It belongs to the WD repeat WDR48 family. Catalytic component of the Usp12-46 deubiquitylase complex consisting of Usp12-46, Wdr20 and Uaf1; regulatory subunit that, together wtih Wdr20, stabilizes Usp12-46. The Usp12-46 deubiquitylase complex associates with arr/arrow; the interaction leads to deubiquitination and stabilization of arr/arrow.

Functionally, regulatory component of the Usp12-46 deubiquitylase complex. activates deubiquitination by increasing the catalytic turnover without increasing the affinity of deubiquitinating enzymes for the substrate. The complex deubiquitylates the wg/wingless-signaling receptor arr/arrow, which stabilizes the receptor and increases its concentration at the cell surface; this enhances the sensitivity of cells to wg/wingless-signal stimulation. This increases the amplitude and spatial range of the signaling response to the wg/wingless morphogen gradient, facilitating the precise concentration-dependent regulation of its target genes. Together with Wdr20 and Usp12-46 required for wg/wingless-mediated signaling in the wing imaginal disc and for wg/wingless-dependent regulation of intestinal stem cell proliferation. The sequence is that of WD repeat-containing protein 48 homolog from Drosophila erecta (Fruit fly).